Consider the following 339-residue polypeptide: Glycerol-3-phosphate dehydrogenase [NAD(P)+] (339 aa).

Ser-11, Trp-12, and Lys-109 together coordinate NADPH. Residues Lys-109, Gly-140, and Ser-142 each contribute to the sn-glycerol 3-phosphate site. Position 144 (Ala-144) interacts with NADPH. Sn-glycerol 3-phosphate contacts are provided by Lys-195, Asp-249, Ser-259, Arg-260, and Asn-261. The active-site Proton acceptor is Lys-195. Residue Arg-260 participates in NADPH binding. Val-284 and Glu-286 together coordinate NADPH.

It belongs to the NAD-dependent glycerol-3-phosphate dehydrogenase family.

It is found in the cytoplasm. It catalyses the reaction sn-glycerol 3-phosphate + NAD(+) = dihydroxyacetone phosphate + NADH + H(+). The enzyme catalyses sn-glycerol 3-phosphate + NADP(+) = dihydroxyacetone phosphate + NADPH + H(+). It functions in the pathway membrane lipid metabolism; glycerophospholipid metabolism. In terms of biological role, catalyzes the reduction of the glycolytic intermediate dihydroxyacetone phosphate (DHAP) to sn-glycerol 3-phosphate (G3P), the key precursor for phospholipid synthesis. This chain is Glycerol-3-phosphate dehydrogenase [NAD(P)+], found in Lactobacillus acidophilus (strain ATCC 700396 / NCK56 / N2 / NCFM).